We begin with the raw amino-acid sequence, 159 residues long: NADH dehydrogenase [ubiquinone] 1 beta subcomplex subunit 10 (159 aa).

This sequence belongs to the complex I NDUFB10 subunit family. In terms of assembly, complex I is composed of 45 different subunits.

Its subcellular location is the mitochondrion inner membrane. Functionally, accessory subunit of the mitochondrial membrane respiratory chain NADH dehydrogenase (Complex I), that is believed not to be involved in catalysis. Complex I functions in the transfer of electrons from NADH to the respiratory chain. The immediate electron acceptor for the enzyme is believed to be ubiquinone. The protein is NADH dehydrogenase [ubiquinone] 1 beta subcomplex subunit 10 of Bombyx mori (Silk moth).